A 1486-amino-acid chain; its full sequence is Chromosome partition protein MukB (1486 aa).

Residue Gly-34–Ser-41 coordinates ATP. Coiled-coil stretches lie at residues Leu-326 to Gln-418, Leu-444 to Gln-480, and Arg-509 to Val-603. Positions Pro-666–Arg-783 are flexible hinge. Coiled-coil stretches lie at residues Glu-835–Glu-923, Glu-977–Ala-1115, and Val-1209–Ser-1266.

It belongs to the SMC family. MukB subfamily. In terms of assembly, homodimerization via its hinge domain. Binds to DNA via its C-terminal region. Interacts, and probably forms a ternary complex, with MukE and MukF via its C-terminal region. The complex formation is stimulated by calcium or magnesium. Interacts with tubulin-related protein FtsZ.

It localises to the cytoplasm. It is found in the nucleoid. Its function is as follows. Plays a central role in chromosome condensation, segregation and cell cycle progression. Functions as a homodimer, which is essential for chromosome partition. Involved in negative DNA supercoiling in vivo, and by this means organize and compact chromosomes. May achieve or facilitate chromosome segregation by condensation DNA from both sides of a centrally located replisome during cell division. This chain is Chromosome partition protein MukB, found in Shigella boydii serotype 4 (strain Sb227).